Reading from the N-terminus, the 224-residue chain is Deoxyribose-phosphate aldolase (224 aa).

The active-site Proton donor/acceptor is Asp91. The active-site Schiff-base intermediate with acetaldehyde is Lys152. Catalysis depends on Lys181, which acts as the Proton donor/acceptor.

It belongs to the DeoC/FbaB aldolase family. DeoC type 1 subfamily.

It localises to the cytoplasm. The enzyme catalyses 2-deoxy-D-ribose 5-phosphate = D-glyceraldehyde 3-phosphate + acetaldehyde. The protein operates within carbohydrate degradation; 2-deoxy-D-ribose 1-phosphate degradation; D-glyceraldehyde 3-phosphate and acetaldehyde from 2-deoxy-alpha-D-ribose 1-phosphate: step 2/2. Catalyzes a reversible aldol reaction between acetaldehyde and D-glyceraldehyde 3-phosphate to generate 2-deoxy-D-ribose 5-phosphate. This chain is Deoxyribose-phosphate aldolase, found in Mycoplasma pneumoniae (strain ATCC 29342 / M129 / Subtype 1) (Mycoplasmoides pneumoniae).